Reading from the N-terminus, the 433-residue chain is Glutamate-1-semialdehyde 2,1-aminomutase (433 aa).

Lys-267 is modified (N6-(pyridoxal phosphate)lysine).

It belongs to the class-III pyridoxal-phosphate-dependent aminotransferase family. HemL subfamily. Homodimer. The cofactor is pyridoxal 5'-phosphate.

Its subcellular location is the cytoplasm. It carries out the reaction (S)-4-amino-5-oxopentanoate = 5-aminolevulinate. The protein operates within porphyrin-containing compound metabolism; protoporphyrin-IX biosynthesis; 5-aminolevulinate from L-glutamyl-tRNA(Glu): step 2/2. In Syntrophobacter fumaroxidans (strain DSM 10017 / MPOB), this protein is Glutamate-1-semialdehyde 2,1-aminomutase.